A 405-amino-acid chain; its full sequence is Scarecrow-like protein 23 (405 aa).

The interval 1-20 (MTTKRIDRDLPSSDDPSSAK) is disordered. Positions 31-400 (ENDGAAAIKL…LSLLTASAWK (370 aa)) constitute a GRAS domain. A leucine repeat I (LRI) region spans residues 38-102 (IKLLSLLLQC…ISSYLSGACS (65 aa)). Residues 45-49 (LQCAE) carry the LxCxE motif motif. The interval 121-186 (LQTYNSVSPL…RKLRSIRITG (66 aa)) is VHIID. The VHIID signature appears at 152 to 156 (VHIID). The leucine repeat II (LRII) stretch occupies residues 196–228 (STGRRLADFASSLNLPFEFHPIEGIIGNLIDPS). Positions 238–327 (VVVHWMQHRL…QIVLGTEIRN (90 aa)) are PFYRE. Positions 330–400 (AHGGGRRKRM…LSLLTASAWK (71 aa)) are SAW.

The protein belongs to the GRAS family. Interacts with SHR. Expressed in seedlings, cotyledons, shoot apex, leaves and flowers.

It is found in the nucleus. Functionally, probable transcription factor involved in plant development. This Arabidopsis thaliana (Mouse-ear cress) protein is Scarecrow-like protein 23 (SCL23).